Here is a 118-residue protein sequence, read N- to C-terminus: Large ribosomal subunit protein uL18 (118 aa).

Belongs to the universal ribosomal protein uL18 family. Part of the 50S ribosomal subunit; part of the 5S rRNA/L5/L18/L25 subcomplex. Contacts the 5S and 23S rRNAs.

In terms of biological role, this is one of the proteins that bind and probably mediate the attachment of the 5S RNA into the large ribosomal subunit, where it forms part of the central protuberance. This is Large ribosomal subunit protein uL18 from Campylobacter jejuni subsp. doylei (strain ATCC BAA-1458 / RM4099 / 269.97).